A 142-amino-acid chain; its full sequence is Cytochrome c-type biogenesis protein CcmE (142 aa).

Topologically, residues M1 to K2 are cytoplasmic. The chain crosses the membrane as a helical; Signal-anchor for type II membrane protein span at residues G3 to G23. At L24–Q142 the chain is on the periplasmic side. Heme contacts are provided by H118 and Y122.

Belongs to the CcmE/CycJ family.

It is found in the cell inner membrane. Its function is as follows. Heme chaperone required for the biogenesis of c-type cytochromes. Transiently binds heme delivered by CcmC and transfers the heme to apo-cytochromes in a process facilitated by CcmF and CcmH. The polypeptide is Cytochrome c-type biogenesis protein CcmE (Thermus thermophilus (strain ATCC BAA-163 / DSM 7039 / HB27)).